Here is a 1340-residue protein sequence, read N- to C-terminus: WASH complex subunit 2 (1340 aa).

A sufficient for interaction with WASHC3, WASHC4 and WASHC5; required for interaction with WASHC1 region spans residues 1-219 (MNRTTPDQEL…VGSDRGSIVD (219 aa)). Ser-157, Ser-159, Ser-204, Ser-205, and Ser-209 each carry phosphoserine. A compositionally biased stretch (low complexity) spans 201–213 (GELSSEEGSVGSD). The interval 201–404 (GELSSEEGSV…SSSKPGKKIP (204 aa)) is disordered. The span at 219–231 (DTEEEKEEEESDE) shows a compositional bias: acidic residues. Residues 232 to 241 (DFAHHSDNDQ) show a composition bias toward basic and acidic residues. Acidic residues-rich tracts occupy residues 249–258 (SDEEEDDDGC) and 265–275 (EKEEEDIEDIE). At Ser-287 the chain carries Phosphoserine. Over residues 292–306 (LAARIKGDAVGRVDE) the composition is skewed to basic and acidic residues. Thr-330 is subject to Phosphothreonine. Residues 354-365 (GSGGGLFSGGKG) show a composition bias toward gly residues. Positions 355-599 (SGGGLFSGGK…QTLSLQAQGE (245 aa)) are sufficient for interaction with CCDC93. An interaction with VPS35 region spans residues 356–1340 (GGGLFSGGKG…DDPLNAFGGQ (985 aa)). Positions 366 to 377 (LFDDEDEESDLF) match the LFa 1 motif. 2 positions are modified to phosphoserine: Ser-394 and Ser-396. Short sequence motifs (LFa) lie at residues 410-418 (VFLGDTDVF), 449-462 (LFDDDDGDDDDDFF), and 481-490 (IFGDDEGDLF). Disordered regions lie at residues 421–586 (ASVP…GGTA), 618–663 (SSDE…KASL), and 695–838 (DSGG…STGV). The span at 450–461 (FDDDDGDDDDDF) shows a compositional bias: acidic residues. Basic and acidic residues predominate over residues 506 to 516 (DENKARAEKKV). Over residues 517-527 (SLPSSKNLKPS) the composition is skewed to low complexity. Short sequence motifs (LFa) lie at residues 536-547 (LFSDEEDSEDLF), 571-582 (LFEDEDEEDNLF), and 616-628 (LFSSDEEDQWNIP). Residues Ser-538 and Ser-543 each carry the phosphoserine modification. Over residues 546 to 566 (LFSSQSASKLKGAPLLPGKLP) the composition is skewed to low complexity. A phosphoserine mark is found at Ser-618 and Ser-619. Residues 636–646 (SDSRSKGESRD) are compositionally biased toward basic and acidic residues. Short sequence motifs (LFa) lie at residues 663 to 673 (LFEEDEEDDLF), 689 to 701 (LFEDDVDSGGSLF), and 725 to 737 (LFSDEEEKEAQLG). 4 positions are modified to phosphoserine: Ser-727, Ser-751, Ser-786, and Ser-801. A compositionally biased stretch (basic and acidic residues) spans 740-767 (PVDKKVESAKESLKFGRTDVAESEKEGL). Residues 802-816 (LFDEEEDKMEDQNTI) carry the LFa 11 motif. Over residues 822–833 (EVGKGRDPDARP) the composition is skewed to basic and acidic residues. 2 short sequence motifs (LFa) span residues 838–846 (VFQDEELLF) and 855–861 (DPDVDLF). Phosphoserine is present on residues Ser-873 and Ser-876. The LFa 14 signature appears at 877–887 (LFGDDEDDDLF). Disordered regions lie at residues 906–950 (DYSV…KEPS) and 987–1205 (FPSS…EDED). A compositionally biased stretch (basic and acidic residues) spans 916 to 930 (KHPETIQGIKEKGIW). The segment at 936-1340 (QDSSGLAPFK…DDPLNAFGGQ (405 aa)) is interaction with phospholipids. The segment covering 1027 to 1045 (NKSRVKMRGKRRPQTRAAR) has biased composition (basic residues). Residues 1028 to 1046 (KSRVKMRGKRRPQTRAARR) form a required for interaction with F-actin-capping protein subunit alpha (CAPZA1 or CAPZA2 or CAPZA3) region. 2 positions are modified to phosphoserine: Ser-1053 and Ser-1086. Low complexity predominate over residues 1093–1109 (EALAAAAAPWEGGPVPG). At Ser-1113 the chain carries Phosphoserine. 6 consecutive short sequence motifs (LFa) follow at residues 1128–1135 (LFDSGDIF), 1170–1184 (MFPALGEASSDDDLF), 1200–1208 (LLEDEDDLF), 1233–1239 (IFEDDIF), 1261–1269 (LFDDNIDIF), and 1289–1298 (IFDDDMDDIF). A phosphoserine mark is found at Ser-1178 and Ser-1179. A disordered region spans residues 1301–1325 (GIQAKTAKPKSRSAQAAPEPRFEHK). The LFa 21 signature appears at 1329–1337 (IFDDPLNAF).

Belongs to the FAM21 family. Component of the WASH core complex also described as WASH regulatory complex (SHRC) composed of WASHC1, WASHC2, WASHC3, WASHC4 and WASHC5; in the complex interacts (via N-terminus) directly with WASHC1. The WASH core complex associates with the F-actin-capping protein dimer (formed by CAPZA1, CAPZA2 or CAPZA3 and CAPZB) in a transient or substoichiometric manner which was initially described as WASH complex. Interacts with VPS35; mediates the association with the retromer CSC complex. Interacts with FKBP15. Interacts with CCDC93, CCDC22, VPS35L; indicative for an association of the WASH core complex with the CCC and retriever complexes. Directly interacts with TBC1D23.

Its subcellular location is the early endosome membrane. The protein resides in the cell membrane. Functionally, acts as a component of the WASH core complex that functions as a nucleation-promoting factor (NPF) at the surface of endosomes, where it recruits and activates the Arp2/3 complex to induce actin polymerization, playing a key role in the fission of tubules that serve as transport intermediates during endosome sorting. Mediates the recruitment of the WASH core complex to endosome membranes via binding to phospholipids and VPS35 of the retromer CSC. Mediates the recruitment of the F-actin-capping protein dimer to the WASH core complex probably promoting localized F-actin polymerization needed for vesicle scission. Via its C-terminus binds various phospholipids, most strongly phosphatidylinositol 4-phosphate (PtdIns-(4)P), phosphatidylinositol 5-phosphate (PtdIns-(5)P) and phosphatidylinositol 3,5-bisphosphate (PtdIns-(3,5)P2). Involved in the endosome-to-plasma membrane trafficking and recycling of SNX27-retromer-dependent cargo proteins, such as GLUT1. Required for the association of DNAJC13, ENTR1, ANKRD50 with retromer CSC subunit VPS35. Required for the endosomal recruitment of CCC and retriever complexes subunits COMMD1 and CCDC93 as well as the retrievere complex subunit VPS35L. The chain is WASH complex subunit 2 from Pongo abelii (Sumatran orangutan).